A 249-amino-acid polypeptide reads, in one-letter code: Tegument protein UL51 homolog (249 aa).

This sequence belongs to the herpesviridae UL51 family. Oligomerizes. Interacts with MDV019; this interaction mediates MDV019 incorporation to virions. In terms of processing, phosphorylated.

Its subcellular location is the virion tegument. It localises to the host cytoplasm. It is found in the host Golgi apparatus. Plays several roles during the time course of infection, including egress of virus particles from the perinuclear space and secondary envelopment of cytoplasmic capsids that bud into specific trans-Golgi network (TGN)-derived membranes. The chain is Tegument protein UL51 homolog (MDV065) from Gallus gallus (Chicken).